Reading from the N-terminus, the 72-residue chain is Translation initiation factor IF-1 (72 aa).

An S1-like domain is found at 1–72 (MAKEDTLEFP…SKGRINYRFK (72 aa)).

It belongs to the IF-1 family. As to quaternary structure, component of the 30S ribosomal translation pre-initiation complex which assembles on the 30S ribosome in the order IF-2 and IF-3, IF-1 and N-formylmethionyl-tRNA(fMet); mRNA recruitment can occur at any time during PIC assembly.

The protein resides in the cytoplasm. Its function is as follows. One of the essential components for the initiation of protein synthesis. Stabilizes the binding of IF-2 and IF-3 on the 30S subunit to which N-formylmethionyl-tRNA(fMet) subsequently binds. Helps modulate mRNA selection, yielding the 30S pre-initiation complex (PIC). Upon addition of the 50S ribosomal subunit IF-1, IF-2 and IF-3 are released leaving the mature 70S translation initiation complex. This chain is Translation initiation factor IF-1, found in Cereibacter sphaeroides (strain ATCC 17029 / ATH 2.4.9) (Rhodobacter sphaeroides).